The primary structure comprises 50 residues: Mast cell degranulating peptide (50 aa).

Residues 1–27 (MISMLRCTFFFVSVILITSYFVTPTMS) form the signal peptide. Position 29 is an N6-formyllysine (lysine 29). Cysteine 30 and cysteine 42 are oxidised to a cystine. Lysine 44 and lysine 48 each carry N6-formyllysine. Asparagine 49 is subject to Asparagine amide.

Expressed by the venom gland.

The protein resides in the secreted. Its function is as follows. Potent anti-inflammatory agent. At low concentrations, mediates the degranulation of mast cells thus evoking an inflammatory response. Also acts as a neurotoxin capable of blocking a class of voltage-gated potassium channels. This chain is Mast cell degranulating peptide, found in Apis cerana cerana (Oriental honeybee).